Consider the following 450-residue polypeptide: Chromosomal replication initiator protein DnaA (450 aa).

Residues 1 to 84 (MENIHDLWDR…AVKFIIPPNQ (84 aa)) form a domain I, interacts with DnaA modulators region. The tract at residues 84 to 111 (QADEKLELPSSAKKQRKPYEEANDFPQS) is domain II. Residues 112–328 (MLNPKYTFDT…GALIRVVAYS (217 aa)) are domain III, AAA+ region. 4 residues coordinate ATP: glycine 156, glycine 158, lysine 159, and threonine 160. Residues 329–450 (SLINKEITAD…KEIQEKLKQL (122 aa)) are domain IV, binds dsDNA.

Belongs to the DnaA family. As to quaternary structure, oligomerizes as a right-handed, spiral filament on DNA at oriC.

Its subcellular location is the cytoplasm. Functionally, plays an essential role in the initiation and regulation of chromosomal replication. ATP-DnaA binds to the origin of replication (oriC) to initiate formation of the DNA replication initiation complex once per cell cycle. Binds the DnaA box (a 9 base pair repeat at the origin) and separates the double-stranded (ds)DNA. Forms a right-handed helical filament on oriC DNA; dsDNA binds to the exterior of the filament while single-stranded (ss)DNA is stabiized in the filament's interior. The ATP-DnaA-oriC complex binds and stabilizes one strand of the AT-rich DNA unwinding element (DUE), permitting loading of DNA polymerase. After initiation quickly degrades to an ADP-DnaA complex that is not apt for DNA replication. Binds acidic phospholipids. In Geobacillus thermodenitrificans (strain NG80-2), this protein is Chromosomal replication initiator protein DnaA.